Consider the following 115-residue polypeptide: Large ribosomal subunit protein bL20c (115 aa).

Belongs to the bacterial ribosomal protein bL20 family.

Its subcellular location is the plastid. It is found in the chloroplast. Its function is as follows. Binds directly to 23S ribosomal RNA and is necessary for the in vitro assembly process of the 50S ribosomal subunit. It is not involved in the protein synthesizing functions of that subunit. The protein is Large ribosomal subunit protein bL20c of Chaetosphaeridium globosum (Charophycean green alga).